The primary structure comprises 574 residues: UvrABC system protein C (574 aa).

A GIY-YIG domain is found at 12-92 (KKPGVYIFKN…IYIHKPKYNI (81 aa)). In terms of domain architecture, UVR spans 200-235 (EEVKNYLQKAMMDYAKIKNYEKAAQMRDTLFKLENL).

It belongs to the UvrC family. Interacts with UvrB in an incision complex.

Its subcellular location is the cytoplasm. Functionally, the UvrABC repair system catalyzes the recognition and processing of DNA lesions. UvrC both incises the 5' and 3' sides of the lesion. The N-terminal half is responsible for the 3' incision and the C-terminal half is responsible for the 5' incision. In Petrotoga mobilis (strain DSM 10674 / SJ95), this protein is UvrABC system protein C.